Reading from the N-terminus, the 367-residue chain is Phosphoribosylformylglycinamidine cyclo-ligase (367 aa).

The protein belongs to the AIR synthase family.

Its subcellular location is the cytoplasm. The enzyme catalyses 2-formamido-N(1)-(5-O-phospho-beta-D-ribosyl)acetamidine + ATP = 5-amino-1-(5-phospho-beta-D-ribosyl)imidazole + ADP + phosphate + H(+). It participates in purine metabolism; IMP biosynthesis via de novo pathway; 5-amino-1-(5-phospho-D-ribosyl)imidazole from N(2)-formyl-N(1)-(5-phospho-D-ribosyl)glycinamide: step 2/2. The polypeptide is Phosphoribosylformylglycinamidine cyclo-ligase (Cyanothece sp. (strain PCC 7425 / ATCC 29141)).